A 405-amino-acid chain; its full sequence is Argininosuccinate synthase (405 aa).

9–17 lines the ATP pocket; that stretch reads AYSGGLDTS. Residues Y87 and S92 each coordinate L-citrulline. ATP is bound at residue G117. L-aspartate contacts are provided by T119, N123, and D124. L-citrulline is bound at residue N123. L-citrulline is bound by residues R127, S176, S185, E262, and Y274.

The protein belongs to the argininosuccinate synthase family. Type 1 subfamily. As to quaternary structure, homotetramer.

The protein resides in the cytoplasm. The catalysed reaction is L-citrulline + L-aspartate + ATP = 2-(N(omega)-L-arginino)succinate + AMP + diphosphate + H(+). It participates in amino-acid biosynthesis; L-arginine biosynthesis; L-arginine from L-ornithine and carbamoyl phosphate: step 2/3. The sequence is that of Argininosuccinate synthase from Caldicellulosiruptor saccharolyticus (strain ATCC 43494 / DSM 8903 / Tp8T 6331).